A 61-amino-acid polypeptide reads, in one-letter code: Putative antitoxin PYRAB11980 (61 aa).

It belongs to the UPF0165 family.

Possibly the antitoxin component of a type II toxin-antitoxin (TA) system. This chain is Putative antitoxin PYRAB11980, found in Pyrococcus abyssi (strain GE5 / Orsay).